The primary structure comprises 300 residues: Regulatory protein NocR (300 aa).

The HTH lysR-type domain occupies 1-59; it reads MIQSRQLEAFRPVMLTGGMTSAANLVRITQPAISRLIRDLEEEIGISLFERTGNRLRPT. The H-T-H motif DNA-binding region spans 19–38; it reads MTSAANLVRITQPAISRLIR.

Belongs to the LysR transcriptional regulatory family.

Functionally, positive regulatory protein for the noc operon involved in nopaline catabolism and uptake. The chain is Regulatory protein NocR (nocR) from Agrobacterium tumefaciens (strain T37).